We begin with the raw amino-acid sequence, 257 residues long: Triosephosphate isomerase (257 aa).

9–11 (NWK) is a binding site for substrate. Histidine 97 (electrophile) is an active-site residue. The Proton acceptor role is filled by glutamate 169. Substrate contacts are provided by residues glycine 175, serine 214, and 235-236 (GG).

Belongs to the triosephosphate isomerase family. In terms of assembly, homodimer.

It is found in the cytoplasm. The enzyme catalyses D-glyceraldehyde 3-phosphate = dihydroxyacetone phosphate. It participates in carbohydrate biosynthesis; gluconeogenesis. Its pathway is carbohydrate degradation; glycolysis; D-glyceraldehyde 3-phosphate from glycerone phosphate: step 1/1. Involved in the gluconeogenesis. Catalyzes stereospecifically the conversion of dihydroxyacetone phosphate (DHAP) to D-glyceraldehyde-3-phosphate (G3P). In Vibrio cholerae serotype O1 (strain ATCC 39315 / El Tor Inaba N16961), this protein is Triosephosphate isomerase.